The following is a 325-amino-acid chain: Putative gluconeogenesis factor (325 aa).

The protein belongs to the gluconeogenesis factor family.

It localises to the cytoplasm. Functionally, required for morphogenesis under gluconeogenic growth conditions. In Streptococcus pyogenes serotype M1, this protein is Putative gluconeogenesis factor.